A 308-amino-acid polypeptide reads, in one-letter code: Probable plastid-lipid-associated protein 9, chloroplastic (308 aa).

A chloroplast-targeting transit peptide spans Met-1–Met-55.

This sequence belongs to the PAP/fibrillin family.

The protein localises to the plastid. It localises to the chloroplast. The protein resides in the plastoglobule. In Arabidopsis thaliana (Mouse-ear cress), this protein is Probable plastid-lipid-associated protein 9, chloroplastic (PAP9).